Reading from the N-terminus, the 264-residue chain is Flagellar brake protein YcgR 1 (264 aa).

Residues 132–249 enclose the PilZ domain; it reads QRREFFRLES…RLAMIERYIA (118 aa).

It belongs to the YcgR family. As to quaternary structure, monomer. Interacts with the flagellar basal bodies.

The protein resides in the bacterial flagellum basal body. Functionally, acts as a flagellar brake, regulating swimming and swarming in a bis-(3'-5') cyclic diguanylic acid (c-di-GMP)-dependent manner. Binds 1 c-di-GMP dimer per subunit. Increasing levels of c-di-GMP lead to decreased motility. The sequence is that of Flagellar brake protein YcgR 1 from Dechloromonas aromatica (strain RCB).